The following is a 206-amino-acid chain: Peptidyl-tRNA hydrolase (206 aa).

Residue Y14 participates in tRNA binding. H19 serves as the catalytic Proton acceptor. Positions 64 and 66 each coordinate tRNA. The tract at residues 182-206 (FNQKNKKKKEKEQPEAATDQLLENK) is disordered.

The protein belongs to the PTH family. In terms of assembly, monomer.

It localises to the cytoplasm. It carries out the reaction an N-acyl-L-alpha-aminoacyl-tRNA + H2O = an N-acyl-L-amino acid + a tRNA + H(+). Hydrolyzes ribosome-free peptidyl-tRNAs (with 1 or more amino acids incorporated), which drop off the ribosome during protein synthesis, or as a result of ribosome stalling. Its function is as follows. Catalyzes the release of premature peptidyl moieties from peptidyl-tRNA molecules trapped in stalled 50S ribosomal subunits, and thus maintains levels of free tRNAs and 50S ribosomes. The polypeptide is Peptidyl-tRNA hydrolase (Desulforamulus reducens (strain ATCC BAA-1160 / DSM 100696 / MI-1) (Desulfotomaculum reducens)).